The following is a 244-amino-acid chain: Ribosomal RNA small subunit methyltransferase NEP1 (244 aa).

The tract at residues 1–33 (MSAASGGFQPRERRFSVQEQDWETTPPKKLRLG) is disordered. Phosphoserine is present on residues Ser-5 and Ser-16. S-adenosyl-L-methionine-binding positions include Thr-176, Gly-201, Gly-206, and 219 to 224 (ISNYPL).

It belongs to the class IV-like SAM-binding methyltransferase superfamily. RNA methyltransferase NEP1 family. In terms of assembly, homodimer. Part of the small subunit (SSU) processome, composed of more than 70 proteins and the RNA chaperone small nucleolar RNA (snoRNA) U3.

The protein resides in the nucleus. Its subcellular location is the nucleolus. The enzyme catalyses pseudouridine(1248) in human 18S rRNA + S-adenosyl-L-methionine = N(1)-methylpseudouridine(1248) in human 18S rRNA + S-adenosyl-L-homocysteine + H(+). In terms of biological role, S-adenosyl-L-methionine-dependent pseudouridine N(1)-methyltransferase that methylates pseudouridine at position in 18S rRNA. Involved the biosynthesis of the hypermodified N1-methyl-N3-(3-amino-3-carboxypropyl) pseudouridine (m1acp3-Psi) conserved in eukaryotic 18S rRNA. Is not able to methylate uridine at this position. Also has an essential role in 40S ribosomal subunit biogenesis independent on its methyltransferase activity, facilitating the incorporation of ribosomal protein S19 during the formation of pre-ribosomes. Part of the small subunit (SSU) processome, first precursor of the small eukaryotic ribosomal subunit. During the assembly of the SSU processome in the nucleolus, many ribosome biogenesis factors, an RNA chaperone and ribosomal proteins associate with the nascent pre-rRNA and work in concert to generate RNA folding, modifications, rearrangements and cleavage as well as targeted degradation of pre-ribosomal RNA by the RNA exosome. This Mus musculus (Mouse) protein is Ribosomal RNA small subunit methyltransferase NEP1.